The following is a 147-amino-acid chain: Large ribosomal subunit protein uL13 (147 aa).

The protein belongs to the universal ribosomal protein uL13 family. In terms of assembly, part of the 50S ribosomal subunit.

Its function is as follows. This protein is one of the early assembly proteins of the 50S ribosomal subunit, although it is not seen to bind rRNA by itself. It is important during the early stages of 50S assembly. This is Large ribosomal subunit protein uL13 from Corynebacterium diphtheriae (strain ATCC 700971 / NCTC 13129 / Biotype gravis).